Reading from the N-terminus, the 902-residue chain is Magnesium-transporting ATPase, P-type 1 (902 aa).

The Cytoplasmic segment spans residues 1–98 (MLKIITRQLF…KPSPWWVHLW (98 aa)). Residues 99–119 (VCYRNPFNILLTILGGISYAT) form a helical membrane-spanning segment. Position 120 (E120) is a topological domain, extracellular. A helical transmembrane segment spans residues 121 to 141 (DLFAAGVIALMVGISTLLNFV). Topologically, residues 142-291 (QEARSTKAAD…QNAFQKGISR (150 aa)) are cytoplasmic. Residues 292 to 312 (VSMLLIRFMLVMAPVVLIING) traverse the membrane as a helical segment. At 313–321 (YTKGDWWEA) the chain is on the extracellular side. Residues 322-339 (ALFALSVAVGLTPEMLPM) form a helical membrane-spanning segment. E335 contributes to the Mg(2+) binding site. The Cytoplasmic segment spans residues 340 to 699 (IVTSTLARGA…IEGRRTFSNM (360 aa)). Residue D377 is the 4-aspartylphosphate intermediate of the active site. The Mg(2+) site is built by D645, D649, and N713. The chain crosses the membrane as a helical span at residues 700–719 (LKYIKMTASSNFGNVFSVLV). The Extracellular segment spans residues 720-728 (ASAFLPFLP). A helical transmembrane segment spans residues 729-748 (MLPLHLLIQNLLYDVSQVAI). Mg(2+) contacts are provided by N738 and D742. Over 749-770 (PFDNVDEEQIQKPQRWNPADLG) the chain is Cytoplasmic. A helical membrane pass occupies residues 771-794 (RFMVFFGPISSIFDILTFCLMWWV). Over 795–803 (FHANTPETQ) the chain is Extracellular. The helical transmembrane segment at 804–822 (TLFQSGWFVVGLLSQTLIV) threads the bilayer. Topologically, residues 823–835 (HMIRTRRLPFIQS) are cytoplasmic. The helical transmembrane segment at 836–855 (RAAWPLMAMTLLVMVVGVSL) threads the bilayer. The Extracellular segment spans residues 856–870 (PFSPLASYLQLQALP). The chain crosses the membrane as a helical span at residues 871–890 (LSYFPWLIAILVGYMTLTQL). At 891-902 (VKGFYSRRYGWQ) the chain is on the cytoplasmic side.

Belongs to the cation transport ATPase (P-type) (TC 3.A.3) family. Type IIIB subfamily.

The protein localises to the cell inner membrane. The enzyme catalyses Mg(2+)(out) + ATP + H2O = Mg(2+)(in) + ADP + phosphate + H(+). Its function is as follows. Mediates magnesium influx to the cytosol. This Salmonella typhimurium (strain 14028s / SGSC 2262) protein is Magnesium-transporting ATPase, P-type 1 (mgtA).